An 869-amino-acid polypeptide reads, in one-letter code: DNA mismatch repair protein MutS (869 aa).

618–625 (GPNMGGKS) provides a ligand contact to ATP.

This sequence belongs to the DNA mismatch repair MutS family.

In terms of biological role, this protein is involved in the repair of mismatches in DNA. It is possible that it carries out the mismatch recognition step. This protein has a weak ATPase activity. This is DNA mismatch repair protein MutS from Zymomonas mobilis subsp. mobilis (strain ATCC 31821 / ZM4 / CP4).